The primary structure comprises 558 residues: 2-isopropylmalate synthase (558 aa).

The 274-residue stretch at 30-303 (PIWCSVDLRD…DPKLDCSDIE (274 aa)) folds into the Pyruvate carboxyltransferase domain. Mg(2+) contacts are provided by Asp39, His242, His244, and Asn278. The interval 437 to 558 (QPGARIKFVD…ANRVLDVVGK (122 aa)) is regulatory domain.

It belongs to the alpha-IPM synthase/homocitrate synthase family. LeuA type 2 subfamily. In terms of assembly, homodimer. Mg(2+) is required as a cofactor.

The protein resides in the cytoplasm. The enzyme catalyses 3-methyl-2-oxobutanoate + acetyl-CoA + H2O = (2S)-2-isopropylmalate + CoA + H(+). Its pathway is amino-acid biosynthesis; L-leucine biosynthesis; L-leucine from 3-methyl-2-oxobutanoate: step 1/4. Catalyzes the condensation of the acetyl group of acetyl-CoA with 3-methyl-2-oxobutanoate (2-ketoisovalerate) to form 3-carboxy-3-hydroxy-4-methylpentanoate (2-isopropylmalate). This is 2-isopropylmalate synthase from Rhizobium meliloti (strain 1021) (Ensifer meliloti).